Consider the following 334-residue polypeptide: Methionine adenosyltransferase 2 subunit beta (334 aa).

Residues 37-40 (TGLL), 60-62 (FRR), 71-72 (NL), cysteine 93, arginine 97, tyrosine 159, and leucine 185 each bind NADP(+). Phosphothreonine is present on threonine 309. The segment at 319 to 334 (LWPFLIDKRWRQTVFH) is required for interaction with MAT2A.

The protein belongs to the dTDP-4-dehydrorhamnose reductase family. MAT2B subfamily. Heterotrimer; composed of a catalytic MAT2A homodimer that binds one regulatory MAT2B chain. Heterohexamer; composed of a central, catalytic MAT2A homotetramer flanked on either side by a regulatory MAT2B chain. NADP binding increases the affinity for MAT2A.

The protein operates within amino-acid biosynthesis; S-adenosyl-L-methionine biosynthesis; S-adenosyl-L-methionine from L-methionine: step 1/1. In terms of biological role, regulatory subunit of S-adenosylmethionine synthetase 2, an enzyme that catalyzes the formation of S-adenosylmethionine from methionine and ATP. Regulates MAT2A catalytic activity by changing its kinetic properties, increasing its affinity for L-methionine. Can bind NADP (in vitro). This is Methionine adenosyltransferase 2 subunit beta (MAT2B) from Bos taurus (Bovine).